The sequence spans 223 residues: Ribonuclease T (223 aa).

The Exonuclease domain maps to 20–194 (VVIDVETAGF…YDTERTAELF (175 aa)). Asp23, Glu25, His181, and Asp186 together coordinate Mg(2+). The Proton donor/acceptor role is filled by His181.

It belongs to the RNase T family. Homodimer. The cofactor is Mg(2+).

Functionally, trims short 3' overhangs of a variety of RNA species, leaving a one or two nucleotide 3' overhang. Responsible for the end-turnover of tRNA: specifically removes the terminal AMP residue from uncharged tRNA (tRNA-C-C-A). Also appears to be involved in tRNA biosynthesis. The chain is Ribonuclease T from Shewanella baltica (strain OS155 / ATCC BAA-1091).